The sequence spans 204 residues: Per os infectivity factor 3 (204 aa).

Forms the PIF complex together with PIF1 and PIF2. The complex also interacts with per os infectivity factor PIF0.

In terms of biological role, per os factor that plays a role in the initiation of host midgut infection. Unlike PIF1 and PIF2, PIF3 is not involved in specific binding of occluded virions (ODV) to the host midgut target cells. The protein is Per os infectivity factor 3 (AC115) of Lepidoptera (butterflies and moths).